Here is a 916-residue protein sequence, read N- to C-terminus: Isoleucine--tRNA ligase (916 aa).

A 'HIGH' region motif is present at residues 57–67 (PYANGNLHMGH). E554 is an L-isoleucyl-5'-AMP binding site. The 'KMSKS' region signature appears at 595–599 (KMSKS). Residue K598 coordinates ATP. Residues C885, C888, C905, and C908 each contribute to the Zn(2+) site.

The protein belongs to the class-I aminoacyl-tRNA synthetase family. IleS type 1 subfamily. Monomer. It depends on Zn(2+) as a cofactor.

The protein resides in the cytoplasm. It carries out the reaction tRNA(Ile) + L-isoleucine + ATP = L-isoleucyl-tRNA(Ile) + AMP + diphosphate. Its function is as follows. Catalyzes the attachment of isoleucine to tRNA(Ile). As IleRS can inadvertently accommodate and process structurally similar amino acids such as valine, to avoid such errors it has two additional distinct tRNA(Ile)-dependent editing activities. One activity is designated as 'pretransfer' editing and involves the hydrolysis of activated Val-AMP. The other activity is designated 'posttransfer' editing and involves deacylation of mischarged Val-tRNA(Ile). The chain is Isoleucine--tRNA ligase from Staphylococcus saprophyticus subsp. saprophyticus (strain ATCC 15305 / DSM 20229 / NCIMB 8711 / NCTC 7292 / S-41).